A 184-amino-acid chain; its full sequence is Photosystem I assembly protein Ycf4 (184 aa).

2 helical membrane passes run phenylalanine 22–serine 42 and isoleucine 57–serine 77.

This sequence belongs to the Ycf4 family.

It is found in the plastid. The protein localises to the chloroplast thylakoid membrane. In terms of biological role, seems to be required for the assembly of the photosystem I complex. The sequence is that of Photosystem I assembly protein Ycf4 from Arabis hirsuta (Hairy rock-cress).